A 316-amino-acid polypeptide reads, in one-letter code: tRNA dimethylallyltransferase (316 aa).

12–19 (GPTASGKT) provides a ligand contact to ATP. 14-19 (TASGKT) contacts substrate. Interaction with substrate tRNA regions lie at residues 37-40 (DSAL) and 161-165 (QRILR).

It belongs to the IPP transferase family. In terms of assembly, monomer. Requires Mg(2+) as cofactor.

It carries out the reaction adenosine(37) in tRNA + dimethylallyl diphosphate = N(6)-dimethylallyladenosine(37) in tRNA + diphosphate. Functionally, catalyzes the transfer of a dimethylallyl group onto the adenine at position 37 in tRNAs that read codons beginning with uridine, leading to the formation of N6-(dimethylallyl)adenosine (i(6)A). The protein is tRNA dimethylallyltransferase of Idiomarina loihiensis (strain ATCC BAA-735 / DSM 15497 / L2-TR).